Consider the following 259-residue polypeptide: Small ribosomal subunit protein uS7m (259 aa).

Residues 1 to 39 constitute a mitochondrion transit peptide; that stretch reads MLRLIKQPLFRCASSGHLMKESLVFIHQTRTFQVGKFTS. The residue at position 157 (Thr-157) is a Phosphothreonine.

This sequence belongs to the universal ribosomal protein uS7 family. Component of the mitochondrial small ribosomal subunit (mt-SSU). Mature yeast 74S mitochondrial ribosomes consist of a small (37S) and a large (54S) subunit. The 37S small subunit contains a 15S ribosomal RNA (15S mt-rRNA) and at least 32 different proteins. The 54S large subunit contains a 21S rRNA (21S mt-rRNA) and at least 45 different proteins.

The protein localises to the mitochondrion. Its function is as follows. Component of the mitochondrial ribosome (mitoribosome), a dedicated translation machinery responsible for the synthesis of mitochondrial genome-encoded proteins, including at least some of the essential transmembrane subunits of the mitochondrial respiratory chain. The mitoribosomes are attached to the mitochondrial inner membrane and translation products are cotranslationally integrated into the membrane. The polypeptide is Small ribosomal subunit protein uS7m (rsm7) (Schizosaccharomyces pombe (strain 972 / ATCC 24843) (Fission yeast)).